A 175-amino-acid chain; its full sequence is Endothelin-2 (175 aa).

The N-terminal stretch at methionine 1–glycine 21 is a signal peptide. Positions glutamine 22–phenylalanine 43 are excised as a propeptide. 2 cysteine pairs are disulfide-bonded: cysteine 46–cysteine 60 and cysteine 48–cysteine 56. Residues valine 67–arginine 175 constitute a propeptide that is removed on maturation. An endothelin-like region spans residues cysteine 93–histidine 108.

This sequence belongs to the endothelin/sarafotoxin family.

Its subcellular location is the secreted. Functionally, vasoconstrictor. This is Endothelin-2 (Edn2) from Mus musculus (Mouse).